Here is a 205-residue protein sequence, read N- to C-terminus: Guanylate kinase (205 aa).

In terms of domain architecture, Guanylate kinase-like spans 17–195 (SRLLVLSGPS…AVEAVERLLF (179 aa)). Position 24-31 (24-31 (GPSGVGKD)) interacts with ATP.

Belongs to the guanylate kinase family.

Its subcellular location is the cytoplasm. It carries out the reaction GMP + ATP = GDP + ADP. Its function is as follows. Essential for recycling GMP and indirectly, cGMP. This Gloeobacter violaceus (strain ATCC 29082 / PCC 7421) protein is Guanylate kinase.